The chain runs to 417 residues: D-inositol 3-phosphate glycosyltransferase (417 aa).

H10 is a binding site for 1D-myo-inositol 3-phosphate. Residues 16–17 and G24 each bind UDP-N-acetyl-alpha-D-glucosamine; that span reads QP. 1D-myo-inositol 3-phosphate is bound by residues 21–26, K79, Y112, T136, and R156; that span reads DAGGMN. UDP-N-acetyl-alpha-D-glucosamine-binding residues include R230, K235, and Q296. Residues Y305, R306, and A308 each coordinate Mg(2+). Residues E318 and E326 each coordinate UDP-N-acetyl-alpha-D-glucosamine. T332 contributes to the Mg(2+) binding site.

This sequence belongs to the glycosyltransferase group 1 family. MshA subfamily. In terms of assembly, homodimer.

It catalyses the reaction 1D-myo-inositol 3-phosphate + UDP-N-acetyl-alpha-D-glucosamine = 1D-myo-inositol 2-acetamido-2-deoxy-alpha-D-glucopyranoside 3-phosphate + UDP + H(+). In terms of biological role, catalyzes the transfer of a N-acetyl-glucosamine moiety to 1D-myo-inositol 3-phosphate to produce 1D-myo-inositol 2-acetamido-2-deoxy-glucopyranoside 3-phosphate in the mycothiol biosynthesis pathway. The sequence is that of D-inositol 3-phosphate glycosyltransferase from Actinosynnema mirum (strain ATCC 29888 / DSM 43827 / JCM 3225 / NBRC 14064 / NCIMB 13271 / NRRL B-12336 / IMRU 3971 / 101).